We begin with the raw amino-acid sequence, 497 residues long: Serine/threonine-protein phosphatase 2A 56 kDa regulatory subunit beta isoform (497 aa).

The span at 1–19 shows a compositional bias: low complexity; the sequence is METKLPPASTPTSPSSPGL. Disordered stretches follow at residues 1-55 and 475-497; these read METK…YQSN and TQGA…GGQS. A phosphoserine; by CLK2 mark is found at Ser32, Ser35, Ser44, Ser46, Ser47, and Ser48. Basic residues predominate over residues 34–45; sequence RSLRRARPRRSH.

Belongs to the phosphatase 2A regulatory subunit B56 family. Component of the serine/threonine-protein phosphatase 2A complex (PP2A). This complex consists of a common heterodimeric core enzyme, composed of a 36 kDa catalytic subunit (subunit C) and a 65 kDa constant scaffold subunit (PR65 or subunit A), that associates with a variety of regulatory subunits. Proteins that associate with the core dimer include three families of regulatory subunits B (the R2/B/PR55/B55, R3/B''/PR72/PR130/PR59 and R5/B'/B56 families), the 48 kDa variable regulatory subunit, viral proteins, and cell signaling molecules. Interacts with SGO1. Interacts with AKT1. Interacts with CUL3 and KLHL15; this interaction leads to proteasomal degradation. Post-translationally, ubiquitinated by E3 CUL3-KLHL15 complex; this modification leads to proteasomal degradation. In terms of tissue distribution, highest expression in brain.

Its subcellular location is the cytoplasm. As the regulatory component of the serine/threonine-protein phosphatase 2A (PP2A) holoenzyme, modulates substrate specificity, subcellular localization, and responsiveness to phosphorylation. The phosphorylated form mediates the interaction between PP2A and AKT1, leading to AKT1 dephosphorylation. In Homo sapiens (Human), this protein is Serine/threonine-protein phosphatase 2A 56 kDa regulatory subunit beta isoform (PPP2R5B).